The primary structure comprises 1207 residues: DNA-directed RNA polymerase subunit beta' (1207 aa).

4 residues coordinate Zn(2+): Cys60, Cys62, Cys75, and Cys78. 3 residues coordinate Mg(2+): Asp449, Asp451, and Asp453. 4 residues coordinate Zn(2+): Cys822, Cys896, Cys903, and Cys906.

It belongs to the RNA polymerase beta' chain family. The RNAP catalytic core consists of 2 alpha, 1 beta, 1 beta' and 1 omega subunit. When a sigma factor is associated with the core the holoenzyme is formed, which can initiate transcription. Mg(2+) serves as cofactor. Zn(2+) is required as a cofactor.

The catalysed reaction is RNA(n) + a ribonucleoside 5'-triphosphate = RNA(n+1) + diphosphate. Its function is as follows. DNA-dependent RNA polymerase catalyzes the transcription of DNA into RNA using the four ribonucleoside triphosphates as substrates. In Staphylococcus aureus (strain USA300), this protein is DNA-directed RNA polymerase subunit beta'.